The chain runs to 434 residues: Eukaryotic translation initiation factor 3 subunit E (434 aa).

Residues 219-392 (FFNHPKGRDL…GHVVMGTQPL (174 aa)) form the PCI domain.

The protein belongs to the eIF-3 subunit E family. Component of the eukaryotic translation initiation factor 3 (eIF-3) complex. The eIF-3 complex interacts with pix. Interacts with mxt.

The protein localises to the cytoplasm. Its function is as follows. Component of the eukaryotic translation initiation factor 3 (eIF-3) complex, which is involved in protein synthesis of a specialized repertoire of mRNAs and, together with other initiation factors, stimulates binding of mRNA and methionyl-tRNAi to the 40S ribosome. The eIF-3 complex specifically targets and initiates translation of a subset of mRNAs involved in cell proliferation. The polypeptide is Eukaryotic translation initiation factor 3 subunit E (eIF3-S6) (Drosophila ananassae (Fruit fly)).